Here is a 278-residue protein sequence, read N- to C-terminus: Large ribosomal subunit protein uL2 (278 aa).

Disordered stretches follow at residues 33–53 and 219–278; these read LTEG…TSRG and LTRG…KKKR. Positions 269–278 are enriched in basic residues; that stretch reads IRSRHAKKKR.

The protein belongs to the universal ribosomal protein uL2 family. As to quaternary structure, part of the 50S ribosomal subunit. Forms a bridge to the 30S subunit in the 70S ribosome.

Its function is as follows. One of the primary rRNA binding proteins. Required for association of the 30S and 50S subunits to form the 70S ribosome, for tRNA binding and peptide bond formation. It has been suggested to have peptidyltransferase activity; this is somewhat controversial. Makes several contacts with the 16S rRNA in the 70S ribosome. The polypeptide is Large ribosomal subunit protein uL2 (Sphingopyxis alaskensis (strain DSM 13593 / LMG 18877 / RB2256) (Sphingomonas alaskensis)).